Reading from the N-terminus, the 489-residue chain is Cytochrome P450 monooxygenase prhB (489 aa).

Helical transmembrane passes span 1 to 21, 212 to 232, and 287 to 307; these read MFSFGFLITAVVFWVVTKVIY, VIFQCLGFFPWIKEPLVMIFA, and LFIGAGAESTATLLMGVAYLL. N-linked (GlcNAc...) asparagine glycosylation is found at asparagine 347 and asparagine 379. Residue cysteine 431 participates in heme binding.

The protein belongs to the cytochrome P450 family. Heme serves as cofactor.

Its subcellular location is the membrane. It participates in secondary metabolite biosynthesis; terpenoid biosynthesis. Cytochrome P450 monooxygenase; part of the gene cluster that mediates the biosynthesis of paraherquonin, a meroterpenoid with a unique, highly congested hexacyclic molecular architecture. The first step of the pathway is the synthesis of 3,5-dimethylorsellinic acid (DMOA) by the polyketide synthase prhL. Synthesis of DMOA is followed by farnesylation by the prenyltransferase prhE, methylesterification by the methyl-transferase prhM, epoxidation of the prenyl chain by the flavin-dependent monooxygenase prhF, and cyclization of the farnesyl moiety by the terpene cyclase prhH, to yield the tetracyclic intermediate, protoaustinoid A. The short chain dehydrogenase prhI then oxidizes the C-3 alcohol group of the terpene cyclase product to transform protoaustinoid A into protoaustinoid B. The FAD-binding monooxygenase prhJ catalyzes the oxidation of protoaustinoid B into preaustinoid A which is further oxidized into preaustinoid A1 by FAD-binding monooxygenase phrK. Finally, prhA leads to berkeleydione via the berkeleyone B intermediate. PrhA is a multifunctional dioxygenase that first desaturates at C5-C6 to form berkeleyone B, followed by rearrangement of the A/B-ring to form the cycloheptadiene moiety in berkeleydione. Berkeleydione serves as the key intermediate for the biosynthesis of paraherquonin as well as many other meroterpenoids. The cytochrome P450 monooxygenases prhB, prhD, and prhN, as well as the isomerase prhC, are probably involved in the late stage of paraherquonin biosynthesis, after the production of berkeleydione. Especially prhC might be a multifunctional enzyme that catalyzes the D-ring expansion via intramolecular methoxy rearrangement, as well as the hydrolysis of the expanded D-ring. This chain is Cytochrome P450 monooxygenase prhB, found in Penicillium brasilianum.